Reading from the N-terminus, the 272-residue chain is Orotidine 5'-phosphate decarboxylase (272 aa).

The active-site Proton donor is Lys95.

The protein belongs to the OMP decarboxylase family. Type 2 subfamily.

The enzyme catalyses orotidine 5'-phosphate + H(+) = UMP + CO2. It functions in the pathway pyrimidine metabolism; UMP biosynthesis via de novo pathway; UMP from orotate: step 2/2. This is Orotidine 5'-phosphate decarboxylase from Cupriavidus metallidurans (strain ATCC 43123 / DSM 2839 / NBRC 102507 / CH34) (Ralstonia metallidurans).